Reading from the N-terminus, the 90-residue chain is UPF0213 protein lwe0147 (90 aa).

The GIY-YIG domain maps to 5–83 (NEHFFYVLKC…SRKNKDSYLI (79 aa)).

This sequence belongs to the UPF0213 family.

This chain is UPF0213 protein lwe0147, found in Listeria welshimeri serovar 6b (strain ATCC 35897 / DSM 20650 / CCUG 15529 / CIP 8149 / NCTC 11857 / SLCC 5334 / V8).